Consider the following 142-residue polypeptide: Hemoglobin subunit alpha-A (142 aa).

The Globin domain occupies 2–142; that stretch reads VLSAADKTNV…VGTVLTAKYR (141 aa). His59 serves as a coordination point for O2. His88 serves as a coordination point for heme b.

The protein belongs to the globin family. Heterotetramer of two alpha chains and two beta chains. In terms of tissue distribution, red blood cells.

Functionally, involved in oxygen transport from the lung to the various peripheral tissues. The polypeptide is Hemoglobin subunit alpha-A (HBAA) (Anser anser anser (Western greylag goose)).